Here is a 27-residue protein sequence, read N- to C-terminus: HSDGTLTSELSRLRDRARLQRLLQGLL.

Residue Leu27 is modified to Leucine amide.

This sequence belongs to the glucagon family.

It localises to the secreted. In terms of biological role, hormone involved in different processes, such as regulation of the pH of the duodenal content, food intake and water homeostasis. Exerts its biological effects by binding to secretin receptor (SCTR), a G-protein coupled receptor expressed in the basolateral domain of several cells. Acts as a key gastrointestinal hormone by regulating the pH of the duodenal content. Secreted by S cells of the duodenum in the crypts of Lieberkuehn and regulates the pH of the duodenum by (1) inhibiting the secretion of gastric acid from the parietal cells of the stomach and (2) stimulating the production of bicarbonate (NaHCO(3)) from the ductal cells of the pancreas. Production of bicarbonate is essential to neutralize the pH and ensure no damage is done to the small intestine by the gastric acid. In addition to regulating the pH of the duodenal content, plays a central role in diet induced thermogenesis: acts as a non-sympathetic brown fat (BAT) activator mediating prandial thermogenesis, which consequentially induces satiation. Mechanistically, secretin released by the gut after a meal binds to secretin receptor (SCTR) in brown adipocytes, activating brown fat thermogenesis by stimulating lipolysis, which is sensed in the brain and promotes satiation. Also able to stimulate lipolysis in white adipocytes. Also plays an important role in cellular osmoregulation: released into the systemic circulation in response to hyperosmolality and acts at different levels in the hypothalamus, pituitary and kidney to regulate water homeostasis. Also plays a role in the central nervous system, possibly by acting as a neuropeptide hormone: required for hippocampal synaptic function and neural progenitor cells maintenance. In Oryctolagus cuniculus (Rabbit), this protein is Secretin.